The following is a 530-amino-acid chain: Autoinducer-2 kinase (530 aa).

Belongs to the FGGY kinase family.

The protein resides in the cytoplasm. It catalyses the reaction (S)-4,5-dihydroxypentane-2,3-dione + ATP = (2S)-2-hydroxy-3,4-dioxopentyl phosphate + ADP + H(+). Catalyzes the phosphorylation of autoinducer-2 (AI-2) to phospho-AI-2, which subsequently inactivates the transcriptional regulator LsrR and leads to the transcription of the lsr operon. Phosphorylates the ring-open form of (S)-4,5-dihydroxypentane-2,3-dione (DPD), which is the precursor to all AI-2 signaling molecules, at the C5 position. This is Autoinducer-2 kinase from Escherichia coli (strain K12 / DH10B).